Here is a 1481-residue protein sequence, read N- to C-terminus: DNA-directed RNA polymerase subunit beta'' (1481 aa).

Cys217, Cys291, Cys298, and Cys301 together coordinate Zn(2+).

This sequence belongs to the RNA polymerase beta' chain family. RpoC2 subfamily. As to quaternary structure, in plastids the minimal PEP RNA polymerase catalytic core is composed of four subunits: alpha, beta, beta', and beta''. When a (nuclear-encoded) sigma factor is associated with the core the holoenzyme is formed, which can initiate transcription. It depends on Zn(2+) as a cofactor.

Its subcellular location is the plastid. It localises to the chloroplast. The enzyme catalyses RNA(n) + a ribonucleoside 5'-triphosphate = RNA(n+1) + diphosphate. In terms of biological role, DNA-dependent RNA polymerase catalyzes the transcription of DNA into RNA using the four ribonucleoside triphosphates as substrates. In Trieres chinensis (Marine centric diatom), this protein is DNA-directed RNA polymerase subunit beta''.